The chain runs to 104 residues: Vegetative-specific protein H7 (104 aa).

Positions Ile-43 to Lys-97 constitute an HTH cro/C1-type domain. Residues Gln-54 to Ser-73 constitute a DNA-binding region (H-T-H motif).

In Dictyostelium discoideum (Social amoeba), this protein is Vegetative-specific protein H7 (cinD-1).